We begin with the raw amino-acid sequence, 91 residues long: Probable Fe(2+)-trafficking protein (91 aa).

Belongs to the Fe(2+)-trafficking protein family.

Could be a mediator in iron transactions between iron acquisition and iron-requiring processes, such as synthesis and/or repair of Fe-S clusters in biosynthetic enzymes. The protein is Probable Fe(2+)-trafficking protein of Cupriavidus metallidurans (strain ATCC 43123 / DSM 2839 / NBRC 102507 / CH34) (Ralstonia metallidurans).